The chain runs to 150 residues: Ribonuclease H (150 aa).

An RNase H type-1 domain is found at 1–142 (MSDSVEIFTD…ADQLANRGVD (142 aa)). Positions 10, 48, 70, and 134 each coordinate Mg(2+).

Belongs to the RNase H family. As to quaternary structure, monomer. Requires Mg(2+) as cofactor.

The protein localises to the cytoplasm. It carries out the reaction Endonucleolytic cleavage to 5'-phosphomonoester.. Endonuclease that specifically degrades the RNA of RNA-DNA hybrids. The polypeptide is Ribonuclease H (Pseudomonas fluorescens (strain ATCC BAA-477 / NRRL B-23932 / Pf-5)).